A 135-amino-acid polypeptide reads, in one-letter code: Large ribosomal subunit protein uL16c (135 aa).

Residues 1–17 show a composition bias toward basic residues; it reads MLSPKRTRFRKQHRGRM. A disordered region spans residues 1–20; it reads MLSPKRTRFRKQHRGRMKGT.

Belongs to the universal ribosomal protein uL16 family. In terms of assembly, part of the 50S ribosomal subunit.

The protein resides in the plastid. Its subcellular location is the chloroplast. The chain is Large ribosomal subunit protein uL16c from Lemna minor (Common duckweed).